We begin with the raw amino-acid sequence, 159 residues long: Succinate dehydrogenase [ubiquinone] cytochrome b small subunit, mitochondrial (159 aa).

A mitochondrion-targeting transit peptide spans 1–30 (MLQTRLGLGALRQGRLLFAVKSFSTTSVAK). Residues 31–65 (IFPPPPQTIKGTVNDAAVFPHHSKLHGSYHWDFER) lie on the Mitochondrial matrix side of the membrane. The chain crosses the membrane as a helical span at residues 66–82 (IIAIAMVPQVMIPLFTG). At 83–89 (TSHPLMD) the chain is on the mitochondrial intermembrane side. Residues 90 to 109 (AALACTLITHAHLGFESCVI) form a helical membrane-spanning segment. Residue H99 participates in heme binding. At 110 to 122 (DYFPARRFKKLSP) the chain is on the mitochondrial matrix side. Y111 contributes to the a ubiquinone binding site. The chain crosses the membrane as a helical span at residues 123 to 140 (LMHWILRGCTVLTLIGVY). Over 141–159 (EFNTNDIGLTEGIKKLWKS) the chain is Mitochondrial intermembrane.

Belongs to the CybS family. In terms of assembly, forms part of complex II containing four subunits: a flavoprotein (FP), an iron-sulfur protein (IP) and a cytochrome b composed of a large and a small subunit.

The protein resides in the mitochondrion inner membrane. It participates in carbohydrate metabolism; tricarboxylic acid cycle. Its function is as follows. Membrane-anchoring subunit of succinate dehydrogenase (SDH) that is involved in complex II of the mitochondrial electron transport chain and is responsible for transferring electrons from succinate to ubiquinone (coenzyme Q). This chain is Succinate dehydrogenase [ubiquinone] cytochrome b small subunit, mitochondrial (sdh4), found in Schizosaccharomyces pombe (strain 972 / ATCC 24843) (Fission yeast).